A 232-amino-acid polypeptide reads, in one-letter code: Ribonuclease P protein component 3 (232 aa).

It belongs to the eukaryotic/archaeal RNase P protein component 3 family. Consists of a catalytic RNA component and at least 4-5 protein subunits. Forms a subcomplex with Rnp2 which stimulates the catalytic RNA.

Its subcellular location is the cytoplasm. The enzyme catalyses Endonucleolytic cleavage of RNA, removing 5'-extranucleotides from tRNA precursor.. In terms of biological role, part of ribonuclease P, a protein complex that generates mature tRNA molecules by cleaving their 5'-ends. The protein is Ribonuclease P protein component 3 of Methanocaldococcus jannaschii (strain ATCC 43067 / DSM 2661 / JAL-1 / JCM 10045 / NBRC 100440) (Methanococcus jannaschii).